The primary structure comprises 148 residues: Antitoxin Xre (148 aa).

It belongs to the MbcA/ParS/Xre antitoxin family. Homodimer. Forms a complex with cognate toxin Rse.

Functionally, antitoxin component of a type II toxin-antitoxin (TA) system. Neutralizes the activity of cognate toxin Res. This chain is Antitoxin Xre, found in Yersinia enterocolitica serotype O:8 / biotype 1B (strain NCTC 13174 / 8081).